The sequence spans 170 residues: Interferon gamma (170 aa).

The N-terminal stretch at 1–20 is a signal peptide; it reads MNSRLCIMALLLCFSQALLG. N-linked (GlcNAc...) asparagine glycosylation is found at Asn36 and Asn103.

It belongs to the type II (or gamma) interferon family. As to quaternary structure, homodimer. Interacts with IFNGR1 (via extracellular domain); this interaction promotes IFNGR1 dimerization. In terms of tissue distribution, released primarily from activated T lymphocytes.

It is found in the secreted. Its function is as follows. Type II interferon produced by immune cells such as T-cells and NK cells that plays crucial roles in antimicrobial, antiviral, and antitumor responses by activating effector immune cells and enhancing antigen presentation. Primarily signals through the JAK-STAT pathway after interaction with its receptor IFNGR1 to affect gene regulation. Upon IFNG binding, IFNGR1 intracellular domain opens out to allow association of downstream signaling components JAK2, JAK1 and STAT1, leading to STAT1 activation, nuclear translocation and transcription of IFNG-regulated genes. Many of the induced genes are transcription factors such as IRF1 that are able to further drive regulation of a next wave of transcription. Plays a role in class I antigen presentation pathway by inducing a replacement of catalytic proteasome subunits with immunoproteasome subunits. In turn, increases the quantity, quality, and repertoire of peptides for class I MHC loading. Increases the efficiency of peptide generation also by inducing the expression of activator PA28 that associates with the proteasome and alters its proteolytic cleavage preference. Up-regulates as well MHC II complexes on the cell surface by promoting expression of several key molecules such as cathepsins B/CTSB, H/CTSH, and L/CTSL. Participates in the regulation of hematopoietic stem cells during development and under homeostatic conditions by affecting their development, quiescence, and differentiation. The protein is Interferon gamma (IFNG) of Sigmodon hispidus (Hispid cotton rat).